The primary structure comprises 450 residues: Ribosomal protein uS12 methylthiotransferase RimO (450 aa).

Residues 16–126 (PRISFVSLGC…VLDAVHQAVP (111 aa)) form the MTTase N-terminal domain. Residues Cys-25, Cys-61, Cys-90, Cys-157, Cys-161, and Cys-164 each coordinate [4Fe-4S] cluster. A Radical SAM core domain is found at 143–380 (LTPRHYAYLK…MLKQQAISAR (238 aa)). Residues 383-449 (KRKVGTRQQV…AYDLIGSAVG (67 aa)) enclose the TRAM domain.

It belongs to the methylthiotransferase family. RimO subfamily. It depends on [4Fe-4S] cluster as a cofactor.

It is found in the cytoplasm. It carries out the reaction L-aspartate(89)-[ribosomal protein uS12]-hydrogen + (sulfur carrier)-SH + AH2 + 2 S-adenosyl-L-methionine = 3-methylsulfanyl-L-aspartate(89)-[ribosomal protein uS12]-hydrogen + (sulfur carrier)-H + 5'-deoxyadenosine + L-methionine + A + S-adenosyl-L-homocysteine + 2 H(+). In terms of biological role, catalyzes the methylthiolation of an aspartic acid residue of ribosomal protein uS12. This Azorhizobium caulinodans (strain ATCC 43989 / DSM 5975 / JCM 20966 / LMG 6465 / NBRC 14845 / NCIMB 13405 / ORS 571) protein is Ribosomal protein uS12 methylthiotransferase RimO.